Consider the following 265-residue polypeptide: Mlc titration factor A (265 aa).

Zn(2+)-binding residues include His-111, His-148, His-152, and Glu-211.

This sequence belongs to the MtfA family. As to quaternary structure, interacts with Mlc. Requires Zn(2+) as cofactor.

Its subcellular location is the cytoplasm. Involved in the modulation of the activity of the glucose-phosphotransferase system (glucose-PTS). Interacts with the transcriptional repressor Mlc, preventing its interaction with DNA and leading to the modulation of expression of genes regulated by Mlc, including ptsG, which encodes the PTS system glucose-specific EIICB component. In terms of biological role, shows zinc-dependent metallopeptidase activity. The sequence is that of Mlc titration factor A from Escherichia coli O127:H6 (strain E2348/69 / EPEC).